The sequence spans 195 residues: ATP-dependent Clp protease proteolytic subunit 2 (195 aa).

Ser95 (nucleophile) is an active-site residue. Residue His120 is part of the active site.

Belongs to the peptidase S14 family. In terms of assembly, fourteen ClpP subunits assemble into 2 heptameric rings which stack back to back to give a disk-like structure with a central cavity, resembling the structure of eukaryotic proteasomes.

It localises to the cytoplasm. It catalyses the reaction Hydrolysis of proteins to small peptides in the presence of ATP and magnesium. alpha-casein is the usual test substrate. In the absence of ATP, only oligopeptides shorter than five residues are hydrolyzed (such as succinyl-Leu-Tyr-|-NHMec, and Leu-Tyr-Leu-|-Tyr-Trp, in which cleavage of the -Tyr-|-Leu- and -Tyr-|-Trp bonds also occurs).. Its function is as follows. Cleaves peptides in various proteins in a process that requires ATP hydrolysis. Has a chymotrypsin-like activity. Plays a major role in the degradation of misfolded proteins. This chain is ATP-dependent Clp protease proteolytic subunit 2, found in Methylococcus capsulatus (strain ATCC 33009 / NCIMB 11132 / Bath).